The sequence spans 648 residues: Protein kinase YegI (648 aa).

Residues 15–302 (TTLGRELGKG…KAWVAALDSL (288 aa)) enclose the Protein kinase domain. ATP-binding positions include 21–29 (LGKGGEGAV) and lysine 41. Residue aspartate 143 is the Proton acceptor of the active site.

Post-translationally, autophosphorylated. Dephosphorylated by PphC.

Probable serine/threonine kinase. The chain is Protein kinase YegI (yegI) from Escherichia coli (strain K12).